Here is a 409-residue protein sequence, read N- to C-terminus: Microfibrillar-associated protein 3-like (409 aa).

Positions 1–28 are cleaved as a signal peptide; the sequence is MGLLKSHLTVCLPPSVPFLILVSTLATA. The Extracellular portion of the chain corresponds to 29–148; the sequence is KSVTNSTLNG…TLRVIFTSGD (120 aa). Residues asparagine 33, asparagine 37, asparagine 67, asparagine 111, and asparagine 135 are each glycosylated (N-linked (GlcNAc...) asparagine). Residues 47–141 form the Ig-like C2-type domain; it reads PVIIARTDHI…GTINNTVTLR (95 aa). Cysteine 68 and cysteine 125 are oxidised to a cystine. The helical transmembrane segment at 149 to 169 threads the bilayer; that stretch reads MGVYYMVVCLVAFTIVMILNI. Residues 170–409 lie on the Cytoplasmic side of the membrane; sequence TRLCMMSSHL…NTCIIYESHV (240 aa). Tyrosine 287 bears the Phosphotyrosine mark. Serine 298, serine 303, serine 306, and serine 307 each carry phosphoserine. Positions 319 to 392 are disordered; the sequence is VSVHPQSKKD…LPPAHLETTE (74 aa). Acidic residues predominate over residues 333-348; the sequence is QEGENLEVKDEEETEP. A compositionally biased stretch (polar residues) spans 362 to 372; that stretch reads DITTTELTSEE.

It localises to the cell membrane. Its subcellular location is the nucleus. The protein resides in the cytoplasm. May participate in the nuclear signaling of EGFR and MAPK1/ERK2. This is Microfibrillar-associated protein 3-like (Mfap3l) from Rattus norvegicus (Rat).